A 176-amino-acid polypeptide reads, in one-letter code: Shikimate kinase (176 aa).

14 to 19 serves as a coordination point for ATP; sequence GAGKSS. Ser-18 is a Mg(2+) binding site. Residues Asp-36, Arg-60, and Gly-82 each coordinate substrate. Residue Arg-120 coordinates ATP. Arg-138 provides a ligand contact to substrate.

It belongs to the shikimate kinase family. Monomer. Requires Mg(2+) as cofactor.

The protein resides in the cytoplasm. It carries out the reaction shikimate + ATP = 3-phosphoshikimate + ADP + H(+). The protein operates within metabolic intermediate biosynthesis; chorismate biosynthesis; chorismate from D-erythrose 4-phosphate and phosphoenolpyruvate: step 5/7. Functionally, catalyzes the specific phosphorylation of the 3-hydroxyl group of shikimic acid using ATP as a cosubstrate. The chain is Shikimate kinase from Dehalococcoides mccartyi (strain ATCC BAA-2266 / KCTC 15142 / 195) (Dehalococcoides ethenogenes (strain 195)).